The primary structure comprises 471 residues: MTSATNGGSLWGARFAGAPADALAALSKSTHFDWRLARYDLAGSRAHARVLQRAGLLTDVELDGMLTALDGLDADVTSGAFVAAESDEDVHGALERGLIERAGPELGGKLRAGRSRNDQIAAFGRMFLRDHARLVARGVLATIDALLAQATAHHGVAMPGRTHLQHAQPVLLSHHLMAHAWALLRDVQRLQDWDRRAAVSPYGSGALAGSSLGLDPNAVADELGFDSAVWNSIDGTASRDVFAEFSWIAAMIGVDLSRISEEIILWATKEFSFVTLDDAFSTGSSIMPQKKNPDVAELARGKAGRLIGDLTGLLATLKGLPLAYNRDLQEDKEPVFDAADTLELLLPAVSGMIATLDFNTERMEELAPLGFALATDVADWLVRQGVPFRDAHELSGAAVKQAESRGVELWDLSDAEYAAISPQLTPELRTVLSTEGSLASRSAQGGTAPSAVLAQRAAFEAQLAPVRDFAR.

This sequence belongs to the lyase 1 family. Argininosuccinate lyase subfamily.

It localises to the cytoplasm. It catalyses the reaction 2-(N(omega)-L-arginino)succinate = fumarate + L-arginine. Its pathway is amino-acid biosynthesis; L-arginine biosynthesis; L-arginine from L-ornithine and carbamoyl phosphate: step 3/3. In Renibacterium salmoninarum (strain ATCC 33209 / DSM 20767 / JCM 11484 / NBRC 15589 / NCIMB 2235), this protein is Argininosuccinate lyase.